The sequence spans 527 residues: Peptide chain release factor 3 (527 aa).

One can recognise a tr-type G domain in the interval 9 to 277 (AKRRTFAIIS…AVVNWAPMPL (269 aa)). GTP contacts are provided by residues 18 to 25 (SHPDAGKT), 86 to 90 (DTPGH), and 140 to 143 (NKLD).

This sequence belongs to the TRAFAC class translation factor GTPase superfamily. Classic translation factor GTPase family. PrfC subfamily.

It is found in the cytoplasm. Its function is as follows. Increases the formation of ribosomal termination complexes and stimulates activities of RF-1 and RF-2. It binds guanine nucleotides and has strong preference for UGA stop codons. It may interact directly with the ribosome. The stimulation of RF-1 and RF-2 is significantly reduced by GTP and GDP, but not by GMP. The chain is Peptide chain release factor 3 from Pseudomonas syringae pv. tomato (strain ATCC BAA-871 / DC3000).